The sequence spans 438 residues: Fumarate hydratase class II (438 aa).

Residues 76-78 (SGT), 101-104 (HPND), 111-113 (SSN), and T159 contribute to the substrate site. The active-site Proton donor/acceptor is H160. S291 is a catalytic residue. Substrate is bound by residues S292 and 297–299 (KTN).

It belongs to the class-II fumarase/aspartase family. Fumarase subfamily. Homotetramer.

The protein resides in the cytoplasm. The catalysed reaction is (S)-malate = fumarate + H2O. It participates in carbohydrate metabolism; tricarboxylic acid cycle; (S)-malate from fumarate: step 1/1. Functionally, involved in the TCA cycle. Catalyzes the stereospecific interconversion of fumarate to L-malate. The chain is Fumarate hydratase class II from Saccharolobus solfataricus (strain ATCC 35092 / DSM 1617 / JCM 11322 / P2) (Sulfolobus solfataricus).